A 719-amino-acid polypeptide reads, in one-letter code: Serine/threonine-protein kinase CBK1 (719 aa).

Disordered regions lie at residues 1–75 (MFGQ…GAGF) and 100–219 (MQQQ…QTSG). The span at 24–38 (QFSSAYMEQQGSHQS) shows a compositional bias: polar residues. The span at 40–63 (QEHLAYEQLQLQQQQQQQQQHAAA) shows a compositional bias: low complexity. Polar residues-rich tracts occupy residues 112 to 130 (ATSIYSQNNNSFTNVNDTT), 139 to 157 (GHYSNSSDYSGQQPASSAY), and 181 to 219 (GDQTLVGNQSSQGAMLSRQSLQCSSVPQSPNGGQRQTSG). A Protein kinase domain is found at 310–631 (FHTVKVIGKG…ANEIKNHPFF (322 aa)). Residues 316–324 (IGKGAFGEV) and Lys339 contribute to the ATP site. The Proton acceptor role is filled by Asp433. The region spanning 632–717 (RGVDWETIRQ…SRFDYLTRKN (86 aa)) is the AGC-kinase C-terminal domain.

This sequence belongs to the protein kinase superfamily. STE Ser/Thr protein kinase family. COT1 subfamily.

The catalysed reaction is L-seryl-[protein] + ATP = O-phospho-L-seryl-[protein] + ADP + H(+). It carries out the reaction L-threonyl-[protein] + ATP = O-phospho-L-threonyl-[protein] + ADP + H(+). Functionally, protein kinase that seems to play a role in the regulation of cell morphogenesis and proliferation. The polypeptide is Serine/threonine-protein kinase CBK1 (CBK1) (Eremothecium gossypii (strain ATCC 10895 / CBS 109.51 / FGSC 9923 / NRRL Y-1056) (Yeast)).